Consider the following 154-residue polypeptide: Fimbrial protein (154 aa).

Positions 1-6 are cleaved as a propeptide — leader sequence; that stretch reads MKAQKG. N-methylphenylalanine is present on Phe-7. Residues 7-27 form a helical membrane-spanning segment; the sequence is FTLIELMIVVAIIGILAAIAI. Residues Cys-133 and Cys-151 are joined by a disulfide bond.

This sequence belongs to the N-Me-Phe pilin family. The pili are polar flexible filaments of about 5.4 nanometers diameter and 2.5 micrometers average length; they consist of only a single polypeptide chain arranged in a helical configuration of five subunits per turn in the assembled pilus.

It localises to the fimbrium. The protein localises to the membrane. In Pseudomonas aeruginosa, this protein is Fimbrial protein (pilA).